The sequence spans 126 residues: uncharacterized protein (126 aa).

Helical transmembrane passes span 4 to 24 (LIIA…VNIL), 42 to 62 (AITI…IINP), and 64 to 84 (ISAS…SYTV).

The protein resides in the membrane. This is an uncharacterized protein from Saccharomyces cerevisiae (strain ATCC 204508 / S288c) (Baker's yeast).